The chain runs to 616 residues: Probable galacturonosyltransferase 4 (616 aa).

The Cytoplasmic portion of the chain corresponds to 1 to 6 (MMVKLR). Residues 7 to 29 (NLVLFFMLLTVVAHILLYTDPAA) traverse the membrane as a helical; Signal-anchor for type II membrane protein segment. Topologically, residues 30–616 (SFKTPFSKRD…VYLRECNINP (587 aa)) are lumenal. The disordered stretch occupies residues 132–152 (QTSEKVDEQPEPNAFGAKKDT). N-linked (GlcNAc...) asparagine glycosylation is found at Asn-291, Asn-326, Asn-378, Asn-481, and Asn-514.

This sequence belongs to the glycosyltransferase 8 family. As to expression, expressed in roots, inflorescences, siliques, leaves and stems.

It is found in the golgi apparatus membrane. It participates in glycan metabolism; pectin biosynthesis. Functionally, may be involved in pectin and/or xylans biosynthesis in cell walls. The chain is Probable galacturonosyltransferase 4 (GAUT4) from Arabidopsis thaliana (Mouse-ear cress).